A 66-amino-acid polypeptide reads, in one-letter code: DNA-directed RNA polymerase subunit Rpo10 (66 aa).

Positions 7, 10, 44, and 45 each coordinate Zn(2+).

It belongs to the archaeal Rpo10/eukaryotic RPB10 RNA polymerase subunit family. As to quaternary structure, part of the 13-subunit RNA polymerase complex. It depends on Zn(2+) as a cofactor.

Its subcellular location is the cytoplasm. The catalysed reaction is RNA(n) + a ribonucleoside 5'-triphosphate = RNA(n+1) + diphosphate. DNA-dependent RNA polymerase (RNAP) catalyzes the transcription of DNA into RNA using the four ribonucleoside triphosphates as substrates. The chain is DNA-directed RNA polymerase subunit Rpo10 from Sulfolobus acidocaldarius (strain ATCC 33909 / DSM 639 / JCM 8929 / NBRC 15157 / NCIMB 11770).